The sequence spans 578 residues: Phosphatase DCR2 (578 aa).

Position 116–123 (116–123) interacts with ATP; that stretch reads GRRWFGKS.

The protein localises to the cytoplasm. Required for cell cycle progression. Has a role in the completion of START. The sequence is that of Phosphatase DCR2 (DCR2) from Saccharomyces cerevisiae (strain ATCC 204508 / S288c) (Baker's yeast).